We begin with the raw amino-acid sequence, 54 residues long: ATP synthase F(0) complex subunit 8 (54 aa).

Residues Pro8 to Ile24 form a helical membrane-spanning segment.

It belongs to the ATPase protein 8 family. Component of the ATP synthase complex composed at least of ATP5F1A/subunit alpha, ATP5F1B/subunit beta, ATP5MC1/subunit c (homooctomer), MT-ATP6/subunit a, MT-ATP8/subunit 8, ATP5ME/subunit e, ATP5MF/subunit f, ATP5MG/subunit g, ATP5MK/subunit k, ATP5MJ/subunit j, ATP5F1C/subunit gamma, ATP5F1D/subunit delta, ATP5F1E/subunit epsilon, ATP5PF/subunit F6, ATP5PB/subunit b, ATP5PD/subunit d, ATP5PO/subunit OSCP. ATP synthase complex consists of a soluble F(1) head domain (subunits alpha(3) and beta(3)) - the catalytic core - and a membrane F(0) domain - the membrane proton channel (subunits c, a, 8, e, f, g, k and j). These two domains are linked by a central stalk (subunits gamma, delta, and epsilon) rotating inside the F1 region and a stationary peripheral stalk (subunits F6, b, d, and OSCP).

It is found in the mitochondrion membrane. Its function is as follows. Subunit 8, of the mitochondrial membrane ATP synthase complex (F(1)F(0) ATP synthase or Complex V) that produces ATP from ADP in the presence of a proton gradient across the membrane which is generated by electron transport complexes of the respiratory chain. ATP synthase complex consist of a soluble F(1) head domain - the catalytic core - and a membrane F(1) domain - the membrane proton channel. These two domains are linked by a central stalk rotating inside the F(1) region and a stationary peripheral stalk. During catalysis, ATP synthesis in the catalytic domain of F(1) is coupled via a rotary mechanism of the central stalk subunits to proton translocation. In vivo, can only synthesize ATP although its ATP hydrolase activity can be activated artificially in vitro. Part of the complex F(0) domain. The polypeptide is ATP synthase F(0) complex subunit 8 (Gallus gallus (Chicken)).